We begin with the raw amino-acid sequence, 189 residues long: UPF0301 protein PLES_04031 (189 aa).

Belongs to the UPF0301 (AlgH) family.

This is UPF0301 protein PLES_04031 from Pseudomonas aeruginosa (strain LESB58).